Reading from the N-terminus, the 422-residue chain is 4-hydroxy-3-methylbut-2-en-1-yl diphosphate synthase (flavodoxin) (422 aa).

[4Fe-4S] cluster contacts are provided by cysteine 316, cysteine 319, cysteine 362, and glutamate 369.

It belongs to the IspG family. Requires [4Fe-4S] cluster as cofactor.

It catalyses the reaction (2E)-4-hydroxy-3-methylbut-2-enyl diphosphate + oxidized [flavodoxin] + H2O + 2 H(+) = 2-C-methyl-D-erythritol 2,4-cyclic diphosphate + reduced [flavodoxin]. The protein operates within isoprenoid biosynthesis; isopentenyl diphosphate biosynthesis via DXP pathway; isopentenyl diphosphate from 1-deoxy-D-xylulose 5-phosphate: step 5/6. Converts 2C-methyl-D-erythritol 2,4-cyclodiphosphate (ME-2,4cPP) into 1-hydroxy-2-methyl-2-(E)-butenyl 4-diphosphate. In Anaplasma marginale (strain St. Maries), this protein is 4-hydroxy-3-methylbut-2-en-1-yl diphosphate synthase (flavodoxin).